Here is a 132-residue protein sequence, read N- to C-terminus: Small ribosomal subunit protein uS9 (132 aa).

The interval 101 to 132 is disordered; sequence KRAGLLTRDPRMKERKKPGLKAARRSPQFSKR. Positions 113–132 are enriched in basic residues; that stretch reads KERKKPGLKAARRSPQFSKR.

This sequence belongs to the universal ribosomal protein uS9 family.

The sequence is that of Small ribosomal subunit protein uS9 from Staphylococcus aureus (strain USA300).